The chain runs to 354 residues: Phosphatidylserine decarboxylase proenzyme (354 aa).

Residues 18–36 traverse the membrane as a helical segment; the sequence is YLITGVTILSFILMFQYKY. Catalysis depends on charge relay system; for autoendoproteolytic cleavage activity residues aspartate 139, histidine 198, and serine 308. Serine 308 serves as the catalytic Schiff-base intermediate with substrate; via pyruvic acid; for decarboxylase activity. Pyruvic acid (Ser); by autocatalysis is present on serine 308.

This sequence belongs to the phosphatidylserine decarboxylase family. PSD-B subfamily. Eukaryotic type I sub-subfamily. Heterodimer of a large membrane-associated beta subunit and a small pyruvoyl-containing alpha subunit. The cofactor is pyruvate. In terms of processing, is synthesized initially as an inactive proenzyme. Formation of the active enzyme involves a self-maturation process in which the active site pyruvoyl group is generated from an internal serine residue via an autocatalytic post-translational modification. Two non-identical subunits are generated from the proenzyme in this reaction, and the pyruvate is formed at the N-terminus of the alpha chain, which is derived from the carboxyl end of the proenzyme. The autoendoproteolytic cleavage occurs by a canonical serine protease mechanism, in which the side chain hydroxyl group of the serine supplies its oxygen atom to form the C-terminus of the beta chain, while the remainder of the serine residue undergoes an oxidative deamination to produce ammonia and the pyruvoyl prosthetic group on the alpha chain. During this reaction, the Ser that is part of the protease active site of the proenzyme becomes the pyruvoyl prosthetic group, which constitutes an essential element of the active site of the mature decarboxylase.

The protein resides in the membrane. The protein localises to the endoplasmic reticulum membrane. It catalyses the reaction a 1,2-diacyl-sn-glycero-3-phospho-L-serine + H(+) = a 1,2-diacyl-sn-glycero-3-phosphoethanolamine + CO2. Its pathway is phospholipid metabolism; phosphatidylethanolamine biosynthesis; phosphatidylethanolamine from CDP-diacylglycerol: step 2/2. Protease activity is inhibited by PMSF. Functionally, catalyzes the formation of phosphatidylethanolamine (PtdEtn) from phosphatidylserine (PtdSer). Plays a central role in phospholipid metabolism and in the interorganelle trafficking of phosphatidylserine. The polypeptide is Phosphatidylserine decarboxylase proenzyme (Plasmodium knowlesi (strain H)).